The sequence spans 110 residues: U1-lycotoxin-Ls1gg (110 aa).

The signal sequence occupies residues 1–20; sequence MKFVLLFGVLLVTLFSYSSA. A propeptide spanning residues 21–44 is cleaved from the precursor; sequence EMLDDFDQADEDELLSLIEKEEAR. 3 disulfides stabilise this stretch: C54–C71, C61–C89, and C73–C87.

Belongs to the neurotoxin 19 (CSTX) family. 03 subfamily. In terms of tissue distribution, expressed by the venom gland.

It localises to the secreted. The polypeptide is U1-lycotoxin-Ls1gg (Lycosa singoriensis (Wolf spider)).